A 63-amino-acid chain; its full sequence is uncharacterized protein (63 aa).

Positions 1–21 (MNRALILTFVLFFALFAISSA) are cleaved as a signal peptide.

This is an uncharacterized protein from Dictyostelium discoideum (Social amoeba).